The primary structure comprises 335 residues: L-carnitine dehydrogenase (335 aa).

Position 29-34 (29-34 (GTGVIG)) interacts with NAD(+).

Belongs to the 3-hydroxyacyl-CoA dehydrogenase family. L-carnitine dehydrogenase subfamily. As to quaternary structure, homodimer.

It is found in the cytoplasm. The enzyme catalyses carnitine + NAD(+) = 3-dehydrocarnitine + NADH + H(+). It participates in amine and polyamine metabolism; carnitine metabolism. Its function is as follows. Catalyzes the NAD(+)-dependent oxidation of L-carnitine to 3-dehydrocarnitine. This is L-carnitine dehydrogenase from Streptomyces griseus subsp. griseus (strain JCM 4626 / CBS 651.72 / NBRC 13350 / KCC S-0626 / ISP 5235).